The primary structure comprises 147 residues: Interleukin-4 (147 aa).

A signal peptide spans 1 to 19 (MGLRPQLAAILLCLLACTG). N20, N61, N90, and N117 each carry an N-linked (GlcNAc...) asparagine glycan. Disulfide bonds link C47–C87 and C69–C114.

It belongs to the IL-4/IL-13 family.

It is found in the secreted. In terms of biological role, participates in at least several B-cell activation processes as well as of other cell types. It is a costimulator of DNA-synthesis. It induces the expression of class II MHC molecules on resting B-cells. It enhances both secretion and cell surface expression of IgE and IgG1. It also regulates the expression of the low affinity Fc receptor for IgE (CD23) on both lymphocytes and monocytes. Positively regulates IL31RA expression in macrophages. Stimulates autophagy in dendritic cells by interfering with mTORC1 signaling and through the induction of RUFY4. The sequence is that of Interleukin-4 (IL4) from Mesocricetus auratus (Golden hamster).